Here is a 204-residue protein sequence, read N- to C-terminus: Putative AgrB-like protein (204 aa).

5 helical membrane-spanning segments follow: residues 52-74 (YGIA…YLWL), 87-107 (LNCT…FQNI), 111-131 (NWIV…FAPA), 151-168 (AMIG…IPFA), and 173-190 (LIMV…PLTY).

It belongs to the AgrB family.

Its subcellular location is the cell membrane. May be involved in the proteolytic processing of a quorum sensing system signal molecule precursor. The protein is Putative AgrB-like protein of Listeria monocytogenes serovar 1/2a (strain ATCC BAA-679 / EGD-e).